We begin with the raw amino-acid sequence, 358 residues long: MAEMTEDSKSDTARKQLVELVDLNLTSNAALNAEIDLFDRYISRLDLRTFETVWKWQNLSTEKIPGRKAKVRTPGRQQLLTLEQKCVVAKSVYKKMIEDLKIAKIHSEKQLDNYKATLEEADIHLAEIKKERSHFKRNIVEELEDKKSMTMSAEKVMRYIEDKIKAKDILIEKLHRKNSALLTHKKKQQAQLRQQEEMAEGVTVLDFELLKFENIRFRKQLDEQNLKQVNLKLLAVKTLQTLNSNKEKLHILTNESEMLSSDTALRTKLLVKIEEETEQAEEERHKAEALNRKLRDQLADFHVPHVLQYIKLKESHGQLQKSVREWERKVEIAEMALKTYTKSWDKLRFAAGAGLVPI.

3 coiled-coil regions span residues Tyr-93–Asn-138, Arg-176–Glu-200, and Arg-266–Ser-343.

The protein belongs to the CFAP263 family. As to quaternary structure, forms a complex with CFAP184; the interaction is required for functional activity in cilia. Interacts with HAP1 and PCM1.

The protein resides in the cytoplasm. The protein localises to the cytoskeleton. It localises to the microtubule organizing center. Its subcellular location is the centrosome. It is found in the centriolar satellite. The protein resides in the cell projection. The protein localises to the cilium. Functionally, component of centriolar satellites contributing to primary cilium formation. In complex with CFAP263, acts as a regulator of ciliary beating that connects radial spoke 3 (RS3) to the inner dynein arm (IDA) and the nexin-dynein regulatory complex (N-DRC). The complex is positioned parallel to N-DRC and forms a connection between the arch at the base of RS3, the IDA tail and N-DRC. This Danio rerio (Zebrafish) protein is Cilia- and flagella-associated protein 263 (cfap263).